Consider the following 142-residue polypeptide: Large-conductance mechanosensitive channel (142 aa).

A run of 3 helical transmembrane segments spans residues 19–39 (VGII…ADLV), 41–61 (PFIA…ALDG), and 78–98 (FAFG…FVVF).

This sequence belongs to the MscL family. Homopentamer.

The protein localises to the cell inner membrane. Functionally, channel that opens in response to stretch forces in the membrane lipid bilayer. May participate in the regulation of osmotic pressure changes within the cell. This chain is Large-conductance mechanosensitive channel, found in Roseobacter denitrificans (strain ATCC 33942 / OCh 114) (Erythrobacter sp. (strain OCh 114)).